The primary structure comprises 2389 residues: Highly reducing polyketide synthase Dhc3 (2389 aa).

Residues 9 to 433 (DVPIAVVGLA…GTNGHAVLES (425 aa)) form the Ketosynthase family 3 (KS3) domain. Active-site for beta-ketoacyl synthase activity residues include cysteine 181, histidine 316, and histidine 356. Residues 551–861 (FVFTGQGAQW…LSGPVEQILN (311 aa)) form a malonyl-CoA:ACP transacylase (MAT) domain region. Serine 641 (for malonyltransferase activity) is an active-site residue. The N-terminal hotdog fold stretch occupies residues 944-1079 (RSLIGAQVPM…GLITIDYADT (136 aa)). A PKS/mFAS DH domain is found at 944–1263 (RSLIGAQVPM…VSELENDTEA (320 aa)). Residues 946-1262 (LIGAQVPMMD…RVSELENDTE (317 aa)) form a dehydratase (DH) domain region. Histidine 976 serves as the catalytic Proton acceptor; for dehydratase activity. Residues 1107 to 1263 (PDICSKEDFY…VSELENDTEA (157 aa)) form a C-terminal hotdog fold region. Aspartate 1173 (proton donor; for dehydratase activity) is an active-site residue. An enoylreductase (ER) domain region spans residues 1673-1987 (GLLDTLAFIE…QGKHRGKLVL (315 aa)). The segment at 2011–2191 (ATYLFVGGLG…VAVDLGIMRD (181 aa)) is catalytic ketoreductase (KRc) domain. The Carrier domain maps to 2302–2379 (EAVSIITDAL…EFAEKIAEKS (78 aa)). Serine 2339 is subject to O-(pantetheine 4'-phosphoryl)serine.

Its pathway is mycotoxin biosynthesis. Its function is as follows. Highly reducing polyketide synthase; part of the gene cluster that mediates the biosynthesis of 10,11-dehydrocurvularin, a prevalent fungal phytotoxin with heat shock response and immune-modulatory activities. The highly reducing polyketide synthase Dhc3 is responsible for biosynthesis up to the tetraketide stage. The non-reducing polyketide synthase Dhc5 then conducts four additional chain extension cycles, producing the unreduced part of the nascent octaketide from C-1 to C-8 in 10,11-dehydrocurvularin. This Alternaria cinerariae protein is Highly reducing polyketide synthase Dhc3 (Dhc3).